Here is a 338-residue protein sequence, read N- to C-terminus: Heme A synthase (338 aa).

The next 5 membrane-spanning stretches (helical) occupy residues 6–26 (ITKWLSISCIMVIAMIVIGGI), 93–113 (GRITALIYIVPLIYFYFKGII), 118–138 (IAPYIIALLLLYVQGFMGWYM), 154–174 (LAFHLIIAVIIYHILFYQLIK), and 201–221 (VIYLQIFLGALVAGLDAGLIY). His256 is a binding site for heme. Transmembrane regions (helical) follow at residues 258-278 (LGGYSVFLVVMALATYLLKIE), 285-305 (IAYFLIIALLMQISTGIITLL), and 308-328 (VPIIIASTHQFFAIVLLSVII). His316 provides a ligand contact to heme.

The protein belongs to the COX15/CtaA family. Type 2 subfamily. In terms of assembly, interacts with CtaB. Heme b is required as a cofactor.

The protein localises to the cell membrane. It carries out the reaction Fe(II)-heme o + 2 A + H2O = Fe(II)-heme a + 2 AH2. The protein operates within porphyrin-containing compound metabolism; heme A biosynthesis; heme A from heme O: step 1/1. In terms of biological role, catalyzes the conversion of heme O to heme A by two successive hydroxylations of the methyl group at C8. The first hydroxylation forms heme I, the second hydroxylation results in an unstable dihydroxymethyl group, which spontaneously dehydrates, resulting in the formyl group of heme A. This chain is Heme A synthase, found in Rickettsia canadensis (strain McKiel).